Consider the following 520-residue polypeptide: Glutamate--cysteine ligase (520 aa).

The protein belongs to the glutamate--cysteine ligase type 1 family. Type 1 subfamily.

The enzyme catalyses L-cysteine + L-glutamate + ATP = gamma-L-glutamyl-L-cysteine + ADP + phosphate + H(+). It participates in sulfur metabolism; glutathione biosynthesis; glutathione from L-cysteine and L-glutamate: step 1/2. This chain is Glutamate--cysteine ligase, found in Sodalis glossinidius (strain morsitans).